A 160-amino-acid polypeptide reads, in one-letter code: Cytochrome b6-f complex subunit 4 (160 aa).

A run of 3 helical transmembrane segments spans residues 36–56 (LLYVFPVVIFGTIGLCTGLAI), 95–115 (LLGIACMAGVPLGLMLVPFIE), and 131–151 (AIFLFGTVVTIWLGIGATFPI).

The protein belongs to the cytochrome b family. PetD subfamily. In terms of assembly, the 4 large subunits of the cytochrome b6-f complex are cytochrome b6, subunit IV (17 kDa polypeptide, PetD), cytochrome f and the Rieske protein, while the 4 small subunits are PetG, PetL, PetM and PetN. The complex functions as a dimer.

The protein resides in the cellular thylakoid membrane. Component of the cytochrome b6-f complex, which mediates electron transfer between photosystem II (PSII) and photosystem I (PSI), cyclic electron flow around PSI, and state transitions. The protein is Cytochrome b6-f complex subunit 4 of Microcystis aeruginosa (strain NIES-843 / IAM M-2473).